The following is a 305-amino-acid chain: D-alanine--D-alanine ligase (305 aa).

Positions 107 to 299 constitute an ATP-grasp domain; that stretch reads KKMLCYHGIA…FDELVERILA (193 aa). 134–186 provides a ligand contact to ATP; it reads PDYPLVVKPAREGSTIGISIVHDEQELAAGLEEAFRHDDLVLVEQFIAGAEVT. Mg(2+)-binding residues include Asp-254, Glu-266, and Asn-268.

Belongs to the D-alanine--D-alanine ligase family. It depends on Mg(2+) as a cofactor. Mn(2+) serves as cofactor.

It is found in the cytoplasm. It carries out the reaction 2 D-alanine + ATP = D-alanyl-D-alanine + ADP + phosphate + H(+). Its pathway is cell wall biogenesis; peptidoglycan biosynthesis. Cell wall formation. This chain is D-alanine--D-alanine ligase, found in Syntrophotalea carbinolica (strain DSM 2380 / NBRC 103641 / GraBd1) (Pelobacter carbinolicus).